A 448-amino-acid chain; its full sequence is Glutamyl-tRNA reductase (448 aa).

Substrate is bound by residues 49–52 (TCNR), serine 109, 114–116 (ETQ), and glutamine 120. Residue cysteine 50 is the Nucleophile of the active site. 189 to 194 (GAGEMS) is an NADP(+) binding site.

This sequence belongs to the glutamyl-tRNA reductase family. As to quaternary structure, homodimer.

The enzyme catalyses (S)-4-amino-5-oxopentanoate + tRNA(Glu) + NADP(+) = L-glutamyl-tRNA(Glu) + NADPH + H(+). It participates in porphyrin-containing compound metabolism; protoporphyrin-IX biosynthesis; 5-aminolevulinate from L-glutamyl-tRNA(Glu): step 1/2. Functionally, catalyzes the NADPH-dependent reduction of glutamyl-tRNA(Glu) to glutamate 1-semialdehyde (GSA). The chain is Glutamyl-tRNA reductase from Staphylococcus aureus (strain bovine RF122 / ET3-1).